We begin with the raw amino-acid sequence, 657 residues long: Probable potassium transport system protein Kup (657 aa).

The disordered stretch occupies residues 1-25; sequence MGSGPADEEHTVDTEPGVSPPRRTV. 12 helical membrane-spanning segments follow: residues 35-55, 77-97, 127-147, 165-185, 196-216, 234-254, 275-295, 315-335, 365-385, 394-414, 422-442, and 447-467; these read VVVGALGVVFGDIGTSPIYTI, VVSLIFWSVMLIVTATYVLLV, TAVLAGLGIFGAALFFGDSMI, PGLEEWIVPITAVIIVALFSV, LFGPVMIVWFVSIGACGVSGI, FFFGHFGIAFFALAAVVLAVT, WLVLVLPACVLSYLGQGALLL, WPMVLLATAATVIASQAVITG, IYVPWINWVLMVSVLTLVFAF, AFGMAVTGTITITTLLFFYIV, LWLVVCGAGCLLAVDLLFLAA, and LVHGAWLPLLIALTAFTVMTT.

This sequence belongs to the HAK/KUP transporter (TC 2.A.72) family.

It is found in the cell membrane. It catalyses the reaction K(+)(in) + H(+)(in) = K(+)(out) + H(+)(out). Transport of potassium into the cell. Likely operates as a K(+):H(+) symporter. The protein is Probable potassium transport system protein Kup of Rhodococcus jostii (strain RHA1).